We begin with the raw amino-acid sequence, 251 residues long: Flap endonuclease Xni (251 aa).

A Mg(2+)-binding site is contributed by Asp104. The 5'-3' exonuclease domain maps to 160-249; sequence VLPRQLPDYW…IDGNLQQLRL (90 aa). Residues Leu171, Ala172, Pro180, Val182, and Ile185 each coordinate K(+). The tract at residues 184 to 189 is interaction with DNA; it reads GIGPKS.

This sequence belongs to the Xni family. It depends on Mg(2+) as a cofactor. K(+) is required as a cofactor.

Has flap endonuclease activity. During DNA replication, flap endonucleases cleave the 5'-overhanging flap structure that is generated by displacement synthesis when DNA polymerase encounters the 5'-end of a downstream Okazaki fragment. This is Flap endonuclease Xni from Salmonella schwarzengrund (strain CVM19633).